Here is a 500-residue protein sequence, read N- to C-terminus: Probable cytosol aminopeptidase (500 aa).

2 residues coordinate Mn(2+): Lys265 and Asp270. Lys277 is an active-site residue. Asp288, Asp347, and Glu349 together coordinate Mn(2+). Residue Arg351 is part of the active site.

The protein belongs to the peptidase M17 family. Mn(2+) is required as a cofactor.

Its subcellular location is the cytoplasm. The catalysed reaction is Release of an N-terminal amino acid, Xaa-|-Yaa-, in which Xaa is preferably Leu, but may be other amino acids including Pro although not Arg or Lys, and Yaa may be Pro. Amino acid amides and methyl esters are also readily hydrolyzed, but rates on arylamides are exceedingly low.. It catalyses the reaction Release of an N-terminal amino acid, preferentially leucine, but not glutamic or aspartic acids.. Functionally, presumably involved in the processing and regular turnover of intracellular proteins. Catalyzes the removal of unsubstituted N-terminal amino acids from various peptides. This chain is Probable cytosol aminopeptidase, found in Corynebacterium diphtheriae (strain ATCC 700971 / NCTC 13129 / Biotype gravis).